The following is a 343-amino-acid chain: Alpha-tocopherol transfer protein-like (343 aa).

Residues 1–29 (MSEESDSLRTSPSVASLSENELPLPPPDP) are disordered. Residues 8 to 19 (LRTSPSVASLSE) show a composition bias toward polar residues. Positions 118–283 (RPSALKDVLN…EYGGTAGELD (166 aa)) constitute a CRAL-TRIO domain.

May act as a protein that binds a hydrophobic ligand. The sequence is that of Alpha-tocopherol transfer protein-like (Ttpal) from Mus musculus (Mouse).